The following is a 362-amino-acid chain: Transcription factor Sox-7 (362 aa).

The interval 19–41 (MDGDLSDGLSPHRSPREKGSETR) is disordered. A compositionally biased stretch (basic and acidic residues) spans 32–41 (SPREKGSETR). Residues 42-110 (IRRPMNAFMV…QHMQDYPNYK (69 aa)) constitute a DNA-binding region (HMG box). One can recognise a Sox C-terminal domain in the interval 246–362 (QPGSSMIPPV…ATYYNSYSVS (117 aa)).

Localized to the vegetal hemisphere of blastula embryos. Tissue-specific expression in early neurula (stage 13-14) embryos begins in the ciliate cells of the epidermis. Starting about stage 24, expression is found in a lateral stripe on each side of the embryo, with expression extending more posteriorly as development proceeds. Expressed in embryonic vasculature, as well as in the procardia tube, endocardium, notochord and hindbrain. As development proceeds, strong expression is seen in the hindbrain, posterior cardinal veins, aortic arch, stomodeal depression, epithelium and intersomitic arteries of stage 33/34 larvae. Expressed in posterior rhombomeres. By stage 40 larvae, expression in most of the vascular endothelia disappears, in particular in the posterior cardinal vein, but expression continues in the hindbrain. Expressed in a wide range of adult tissues, including ovary, testis, kidney, bladder, duodenum and liver.

The protein resides in the nucleus. Functionally, transcription factor. Binds to the DNA sequence 5'-AACAAT-3'. Acts downstream of vegt and upstream of nodal signaling to promote endodermal and mesodermal differentiation by promoting vegt-induced expression of both endodermal genes (including endodermin) and mesodermal genes (including snai1/snail and snai2/slug). Induces expression of multiple nodal genes (including nodal, nodal2, nodal4, nodal5 and nodal6) and binds directly to sites within the promoter of the nodal5 gene. The endodermal and mesodermal specification pathways then interact to initiate cardiogenesis. Acts partially redundantly with sox18 during cardiogenesis. Also acts as an antagonist of beta-catenin signaling. Regulates (possibly indirectly) development of the pronephros, the functional larval kidney. This chain is Transcription factor Sox-7 (sox7), found in Xenopus laevis (African clawed frog).